Here is a 124-residue protein sequence, read N- to C-terminus: MALHSAIKGKLISVIGDEDTCVGFLLGGVGEINKNRHPNFMVVDKNTAVSELEDCFKRFLKRDDIDIILINQNCAELIRHVIDAHTSPVPAVLEIPSKDHPYDASKDSILRRARGMFNPEDLVR.

The residue at position 87 (Ser-87) is a Phosphoserine.

This sequence belongs to the V-ATPase F subunit family. In terms of assembly, V-ATPase is a heteromultimeric enzyme made up of two complexes: the ATP-hydrolytic V1 complex and the proton translocation V0 complex. The V1 complex consists of three catalytic AB heterodimers that form a heterohexamer, three peripheral stalks each consisting of EG heterodimers, one central rotor including subunits D and F, and the regulatory subunits C and H. The proton translocation complex V0 consists of the proton transport subunit a, a ring of proteolipid subunits c9c'', rotary subunit d, subunits e and f, and the accessory subunits VhaAC45 and ATP6AP2.

Subunit of the V1 complex of vacuolar(H+)-ATPase (V-ATPase), a multisubunit enzyme composed of a peripheral complex (V1) that hydrolyzes ATP and a membrane integral complex (V0) that translocates protons. V-ATPase is responsible for acidifying and maintaining the pH of intracellular compartments and in some cell types, is targeted to the plasma membrane, where it is responsible for acidifying the extracellular environment. This Drosophila melanogaster (Fruit fly) protein is V-type proton ATPase subunit F 1 (Vha14-1).